The primary structure comprises 162 residues: Probable chemoreceptor glutamine deamidase CheD (162 aa).

The protein belongs to the CheD family.

It catalyses the reaction L-glutaminyl-[protein] + H2O = L-glutamyl-[protein] + NH4(+). Functionally, probably deamidates glutamine residues to glutamate on methyl-accepting chemotaxis receptors (MCPs), playing an important role in chemotaxis. This chain is Probable chemoreceptor glutamine deamidase CheD, found in Caldanaerobacter subterraneus subsp. tengcongensis (strain DSM 15242 / JCM 11007 / NBRC 100824 / MB4) (Thermoanaerobacter tengcongensis).